A 317-amino-acid chain; its full sequence is Orange carotenoid-binding protein (317 aa).

The 152-residue stretch at Ala18 to Gly169 folds into the OCP N-terminal domain. 3'-hydroxyechinenone is bound by residues Leu37, Tyr203, and Trp290.

The protein belongs to the orange carotenoid-binding protein family. As to quaternary structure, homodimer. 3'-hydroxyechinenone serves as cofactor. In terms of processing, proteolytically cleaved into a red 16.7 kDa form named red carotenoid-binding protein (RCP) which lacks 15 residues from the N-terminus and approximately 150 residues from the C-terminus.

Its subcellular location is the cellular thylakoid membrane. Its function is as follows. Acts as a blue-light photoreceptor and photo-protectant. Essential for inhibiting damaged induced by excess blue-green light via a process known as non-photochemical quenching (NPQ). Binding carotenoids improves OCP's intrinsic photoprotectant activity by broadening its absorption spectrum and facilitating the dissipation of absorbed energy. In the dark or dim light the stable inactive form (OCP-O) is orange, upon illumination with blue-green light it converts to a metastable active red form (OCP-R), inducing energy dissipation, quenching cellular fluorescence via NPQ. The polypeptide is Orange carotenoid-binding protein (Limnospira maxima (Arthrospira maxima)).